A 378-amino-acid polypeptide reads, in one-letter code: Probable pectin lyase A (378 aa).

The N-terminal stretch at 1–18 is a signal peptide; the sequence is MKYQDLLAIAGCIANAGA. Disulfide bonds link Cys-81–Cys-100 and Cys-90–Cys-224. Asn-127 carries an N-linked (GlcNAc...) asparagine glycan. Arg-254 is an active-site residue. Cys-321 and Cys-329 are joined by a disulfide.

It belongs to the polysaccharide lyase 1 family.

It is found in the secreted. It carries out the reaction Eliminative cleavage of (1-&gt;4)-alpha-D-galacturonan methyl ester to give oligosaccharides with 4-deoxy-6-O-methyl-alpha-D-galact-4-enuronosyl groups at their non-reducing ends.. Functionally, pectinolytic enzymes consist of four classes of enzymes: pectin lyase, polygalacturonase, pectin methylesterase and rhamnogalacturonase. Among pectinolytic enzymes, pectin lyase is the most important in depolymerization of pectin, since it cleaves internal glycosidic bonds of highly methylated pectins. The chain is Probable pectin lyase A (pelA) from Aspergillus fumigatus (strain CBS 144.89 / FGSC A1163 / CEA10) (Neosartorya fumigata).